Consider the following 145-residue polypeptide: Small ribosomal subunit protein uS12 (145 aa).

The protein belongs to the universal ribosomal protein uS12 family. As to quaternary structure, component of the small ribosomal subunit. Mature ribosomes consist of a small (40S) and a large (60S) subunit. The 40S subunit contains about 32 different proteins and 1 molecule of RNA (18S). The 60S subunit contains 45 different proteins and 3 molecules of RNA (25S, 5.8S and 5S).

Its subcellular location is the cytoplasm. Its function is as follows. Component of the ribosome, a large ribonucleoprotein complex responsible for the synthesis of proteins in the cell. The small ribosomal subunit (SSU) binds messenger RNAs (mRNAs) and translates the encoded message by selecting cognate aminoacyl-transfer RNA (tRNA) molecules. The large subunit (LSU) contains the ribosomal catalytic site termed the peptidyl transferase center (PTC), which catalyzes the formation of peptide bonds, thereby polymerizing the amino acids delivered by tRNAs into a polypeptide chain. The nascent polypeptides leave the ribosome through a tunnel in the LSU and interact with protein factors that function in enzymatic processing, targeting, and the membrane insertion of nascent chains at the exit of the ribosomal tunnel. The protein is Small ribosomal subunit protein uS12 (RPS23A) of Candida albicans (strain SC5314 / ATCC MYA-2876) (Yeast).